Reading from the N-terminus, the 534-residue chain is MTREDLPDSTPEESKLPMEFQSPLLEKRRRPVVHPSAPAPLPKDYAFTFFDPNDPACQEILLDPQTSVPELFAIIRQWVPQVQHKIDIIGSEILKRGCHVNDRDGLTDMTLLHYACKAGAHGVGDPAAAVRLTNQLLLLGADITLRSRWTNMNALHYAAYFDVPELLRTLLKASKPKVLNSTCSDFNHGTAMHIAASNLCLGAVKCLLEHGANPSARNSKSQVPADVVPDPMDMGLDKADSAMIAKELKQLLLDAVPLTCNLPKITLPNYDNIPGNLMLASLGLKLGDRILLDAEKAGTLRFCGTTEFASGQWVGVELDEPDGKNDGSVGGIRYFICPPKQGIFAPVSKISKAPDQPPSSVTSTPRTPRVDFSRVTGKGRKEKKATHKKSLSVGSLDREGLKIEIGDQVLVAGQKQGIVRFYGKTDFAPGYWFGIELEKPTGKHDGSVFGVRYFTCSAKNGVFAPPSRVQRMGGPKDPQTDNNDMKKVHQVTMTQPKRNFTKVRTPKEIASENSMSRILFCCWFPWLLRAEMKS.

Residues 1-16 (MTREDLPDSTPEESKL) are compositionally biased toward basic and acidic residues. Residues 1–33 (MTREDLPDSTPEESKLPMEFQSPLLEKRRRPVV) are disordered. ANK repeat units follow at residues 107 to 148 (TDMT…LRSR), 150 to 173 (TNMN…LLKA), and 187 to 299 (NHGT…KAGT). Residues 304-346 (GTTEFASGQWVGVELDEPDGKNDGSVGGIRYFICPPKQGIFAP) form the CAP-Gly 1 domain. The segment at 349–391 (KISKAPDQPPSSVTSTPRTPRVDFSRVTGKGRKEKKATHKKSL) is disordered. Positions 358-367 (PSSVTSTPRT) are enriched in low complexity. Residues 377-390 (GKGRKEKKATHKKS) are compositionally biased toward basic residues. In terms of domain architecture, CAP-Gly 2 spans 423-465 (GKTDFAPGYWFGIELEKPTGKHDGSVFGVRYFTCSAKNGVFAP). Residues 475-534 (PKDPQTDNNDMKKVHQVTMTQPKRNFTKVRTPKEIASENSMSRILFCCWFPWLLRAEMKS) are goLD.

Homodimer.

It localises to the cytoplasm. The protein localises to the golgi apparatus. The protein resides in the golgi stack. Functions as a cytoplasmic linker protein. Involved in TGN-endosome dynamics. The protein is CAP-Gly domain-containing linker protein 3 (clip3) of Xenopus laevis (African clawed frog).